Here is a 565-residue protein sequence, read N- to C-terminus: Mediator of RNA polymerase II transcription subunit 1 (565 aa).

The segment at 141–170 is disordered; that stretch reads SGNNLGSGNGTNGSSLTNKTDKKSVSSGNG.

Belongs to the Mediator complex subunit 1 family. Component of the Mediator complex.

It localises to the nucleus. Functionally, component of the Mediator complex, a coactivator involved in the regulated transcription of nearly all RNA polymerase II-dependent genes. Mediator functions as a bridge to convey information from gene-specific regulatory proteins to the basal RNA polymerase II transcription machinery. Mediator is recruited to promoters by direct interactions with regulatory proteins and serves as a scaffold for the assembly of a functional preinitiation complex with RNA polymerase II and the general transcription factors. This is Mediator of RNA polymerase II transcription subunit 1 (MED1) from Candida glabrata (strain ATCC 2001 / BCRC 20586 / JCM 3761 / NBRC 0622 / NRRL Y-65 / CBS 138) (Yeast).